Here is a 357-residue protein sequence, read N- to C-terminus: GTPase Obg (357 aa).

In terms of domain architecture, Obg spans 1–159; the sequence is MKFVDEAFID…RNLKLELKVL (159 aa). The 175-residue stretch at 160-334 folds into the OBG-type G domain; that stretch reads ADVGLLGMPN…LVQSIFQHVH (175 aa). GTP is bound by residues 166 to 173, 191 to 195, 213 to 216, 284 to 287, and 315 to 317; these read GMPNAGKS, FTTLH, DIPG, NKLD, and SAL. The Mg(2+) site is built by serine 173 and threonine 193.

Belongs to the TRAFAC class OBG-HflX-like GTPase superfamily. OBG GTPase family. Monomer. Mg(2+) serves as cofactor.

The protein resides in the cytoplasm. In terms of biological role, an essential GTPase which binds GTP, GDP and possibly (p)ppGpp with moderate affinity, with high nucleotide exchange rates and a fairly low GTP hydrolysis rate. Plays a role in control of the cell cycle, stress response, ribosome biogenesis and in those bacteria that undergo differentiation, in morphogenesis control. The protein is GTPase Obg of Acidovorax ebreus (strain TPSY) (Diaphorobacter sp. (strain TPSY)).